Reading from the N-terminus, the 372-residue chain is N-methyl-L-tryptophan oxidase (372 aa).

4–34 (DLIIIGSGSVGAAAGYYATRAGLNVLMTDAH) serves as a coordination point for FAD. At cysteine 308 the chain carries S-8alpha-FAD cysteine.

It belongs to the MSOX/MTOX family. MTOX subfamily. In terms of assembly, monomer. The cofactor is FAD.

The enzyme catalyses N(alpha)-methyl-L-tryptophan + O2 + H2O = L-tryptophan + formaldehyde + H2O2. Functionally, catalyzes the oxidative demethylation of N-methyl-L-tryptophan. The protein is N-methyl-L-tryptophan oxidase of Escherichia coli O81 (strain ED1a).